Here is a 35-residue protein sequence, read N- to C-terminus: Photosystem II reaction center protein T (35 aa).

The helical transmembrane segment at 3–23 threads the bilayer; the sequence is ALVYTFLLVSTLGIIFFAIFF.

The protein belongs to the PsbT family. As to quaternary structure, PSII is composed of 1 copy each of membrane proteins PsbA, PsbB, PsbC, PsbD, PsbE, PsbF, PsbH, PsbI, PsbJ, PsbK, PsbL, PsbM, PsbT, PsbY, PsbZ, Psb30/Ycf12, at least 3 peripheral proteins of the oxygen-evolving complex and a large number of cofactors. It forms dimeric complexes.

Its subcellular location is the plastid. The protein localises to the chloroplast thylakoid membrane. Functionally, found at the monomer-monomer interface of the photosystem II (PS II) dimer, plays a role in assembly and dimerization of PSII. PSII is a light-driven water plastoquinone oxidoreductase, using light energy to abstract electrons from H(2)O, generating a proton gradient subsequently used for ATP formation. The sequence is that of Photosystem II reaction center protein T from Cycas revoluta (Sago palm).